Consider the following 1109-residue polypeptide: Zinc finger E-box-binding homeobox 1 (1109 aa).

2 disordered regions span residues 1–106 (MADG…DPNV) and 123–143 (PEED…NGTP). Low complexity predominate over residues 15–30 (PRRNNVTNYNTVVEAN). A phosphoserine mark is found at Ser-31 and Ser-33. The span at 87–98 (VKDDECDSDAEN) shows a compositional bias: acidic residues. The C2H2-type 1 zinc-finger motif lies at 150–173 (LTCPYCDRGYKRFTSLKEHIKYRH). Glycyl lysine isopeptide (Lys-Gly) (interchain with G-Cter in SUMO2) cross-links involve residues Lys-166 and Lys-175. C2H2-type zinc fingers lie at residues 180-202 (FSCS…MTSH) and 220-242 (FKCT…LRIH). The C2H2-type 4; atypical zinc-finger motif lies at 248–272 (YECPNCKKRFSHSGSYSSHISSKKC). Residues 278–307 (VNGRPRSGLKTSQCSSPSLSTSPGSPTRPQ) are disordered. A Glycyl lysine isopeptide (Lys-Gly) (interchain with G-Cter in SUMO2) cross-link involves residue Lys-287. Low complexity predominate over residues 288-304 (TSQCSSPSLSTSPGSPT). Phosphoserine occurs at positions 293 and 302. Residues Lys-311 and Lys-315 each participate in a glycyl lysine isopeptide (Lys-Gly) (interchain with G-Cter in SUMO2) cross-link. Lys-327 is covalently cross-linked (Glycyl lysine isopeptide (Lys-Gly) (interchain with G-Cter in SUMO); alternate). A Glycyl lysine isopeptide (Lys-Gly) (interchain with G-Cter in SUMO2); alternate cross-link involves residue Lys-327. Glycyl lysine isopeptide (Lys-Gly) (interchain with G-Cter in SUMO2) cross-links involve residues Lys-419, Lys-473, Lys-484, Lys-495, and Lys-528. 3 disordered regions span residues 468-501 (VPQN…KDKS), 525-566 (PELK…SQPP), and 614-711 (QIPG…PQVE). Positions 483 to 501 (CKSEKSPEDLTVKSEKDKS) are enriched in basic and acidic residues. The homeobox; atypical DNA-binding region spans 559–618 (DLSPSQPPLKNLLSLLKAYYALNAQPSTEELTKIADSVNLPLDVVKKWFEKMQAGQIPGQ). A compositionally biased stretch (polar residues) spans 654–665 (RGQSPLKMTSSP). A phosphoserine mark is found at Ser-657, Ser-664, Ser-671, and Ser-678. The segment covering 673-703 (INGSRSCTSSPSPLNLSSARNPQGYSCVSEG) has biased composition (polar residues). Thr-680 carries the phosphothreonine modification. Ser-682 bears the Phosphoserine mark. Lys-752 participates in a covalent cross-link: Glycyl lysine isopeptide (Lys-Gly) (interchain with G-Cter in SUMO); alternate. A Glycyl lysine isopeptide (Lys-Gly) (interchain with G-Cter in SUMO2); alternate cross-link involves residue Lys-752. Positions 834 to 873 (PPVKVIQPNGNQDERQDTSSEGVSVEDQNDSDCTPPKKKT) are disordered. 2 consecutive C2H2-type zinc fingers follow at residues 881–903 (YACD…KYEH) and 909–931 (HECG…MRLH). The segment at 937–958 (YQCDKCGKRFSHSGSYSQHMNH) adopts a C2H2-type 7; atypical zinc-finger fold. A disordered region spans residues 968–1109 (EDRDAMEQED…RLSEEKTNEA (142 aa)). Residues 1012–1066 (EEDEDSEKEEEEEDKEMEELQEDKECENPQEEEEEEEEEEEEEEEEEEEEAEEAE) are compositionally biased toward acidic residues. Residues 1071–1087 (AAKTGGAVEEEAAQQAG) show a composition bias toward low complexity. Over residues 1097 to 1109 (ESKRLSEEKTNEA) the composition is skewed to basic and acidic residues.

It belongs to the delta-EF1/ZFH-1 C2H2-type zinc-finger family. As to quaternary structure, interacts (via N-terminus) with SMARCA4/BRG1. Ubiquitinated, leading to degradation in a proteasome-dependent manner. Deubiquitinated by USP51, leading to stabilization.

The protein localises to the nucleus. Acts as a transcriptional repressor. Binds to E-box sequences in the immunoglobulin heavy chain enhancer as well as in the regulatory regions of many other tissue-specific genes. Represses E-cadherin promoter and induces an epithelial-mesenchymal transition (EMT) by recruiting SMARCA4/BRG1. Represses BCL6 transcription in the presence of the corepressor CTBP1. Positively regulates neuronal differentiation. Represses RCOR1 transcription activation during neurogenesis. Represses transcription by binding to the E box (5'-CANNTG-3'). In the absence of TGFB1, acts as a repressor of COL1A2 transcription via binding to the E-box in the upstream enhancer region. In Rattus norvegicus (Rat), this protein is Zinc finger E-box-binding homeobox 1.